Here is a 189-residue protein sequence, read N- to C-terminus: 3-isopropylmalate dehydratase small subunit (189 aa).

The protein belongs to the LeuD family. LeuD type 1 subfamily. As to quaternary structure, heterodimer of LeuC and LeuD.

The enzyme catalyses (2R,3S)-3-isopropylmalate = (2S)-2-isopropylmalate. Its pathway is amino-acid biosynthesis; L-leucine biosynthesis; L-leucine from 3-methyl-2-oxobutanoate: step 2/4. Its function is as follows. Catalyzes the isomerization between 2-isopropylmalate and 3-isopropylmalate, via the formation of 2-isopropylmaleate. The polypeptide is 3-isopropylmalate dehydratase small subunit (Francisella tularensis subsp. holarctica (strain FTNF002-00 / FTA)).